Here is a 189-residue protein sequence, read N- to C-terminus: Elongation factor P (189 aa).

The protein belongs to the elongation factor P family.

Its subcellular location is the cytoplasm. The protein operates within protein biosynthesis; polypeptide chain elongation. In terms of biological role, involved in peptide bond synthesis. Stimulates efficient translation and peptide-bond synthesis on native or reconstituted 70S ribosomes in vitro. Probably functions indirectly by altering the affinity of the ribosome for aminoacyl-tRNA, thus increasing their reactivity as acceptors for peptidyl transferase. This Chloroflexus aurantiacus (strain ATCC 29364 / DSM 637 / Y-400-fl) protein is Elongation factor P.